Consider the following 309-residue polypeptide: MLQLSKSPCMRTPATRSDSYELCRQITAQYAKTFYLGTQLMPLAKRQAIWAIYVWCRRTDELVDGPMASSTTLETLDHWEEQLESIFAGHPIEPVDVALVDTLGRFPLDIQPFRDMIAGQRMDLSRNRYNTFDELNLYCYRVAGTVGLMSLAVMGTAEPDLSVPWNRDQSIYYPKEEAIALGIANQLTNILRDVGEDARRGRIYLPLDDLALFNYTEADLLNGKVDERWRELMRFQIQRARKFYTLAEEGIAALHPDIRWPVWTALMLYRQILDEIERNEYDVFNQRAYVPTWKKMMCLPLAQLRARVL.

It belongs to the phytoene/squalene synthase family.

It carries out the reaction 2 (2E,6E,10E)-geranylgeranyl diphosphate = 15-cis-phytoene + 2 diphosphate. The protein operates within carotenoid biosynthesis; phytoene biosynthesis; all-trans-phytoene from geranylgeranyl diphosphate: step 1/1. Functionally, catalyzes the reaction from prephytoene diphosphate to phytoene. The sequence is that of Phytoene synthase (crtB) from Arthrospira platensis (Spirulina platensis).